The following is a 524-amino-acid chain: 2-isopropylmalate synthase (524 aa).

In terms of domain architecture, Pyruvate carboxyltransferase spans 5–267; the sequence is VIIFDTTLRD…HTNIRHSEIH (263 aa). The Mn(2+) site is built by Asp14, His202, His204, and Asn238. Residues 392-524 are regulatory domain; that stretch reads KLEYLGVQSG…KTDKINTESV (133 aa).

This sequence belongs to the alpha-IPM synthase/homocitrate synthase family. LeuA type 1 subfamily. As to quaternary structure, homodimer. The cofactor is Mn(2+).

It is found in the cytoplasm. It carries out the reaction 3-methyl-2-oxobutanoate + acetyl-CoA + H2O = (2S)-2-isopropylmalate + CoA + H(+). It participates in amino-acid biosynthesis; L-leucine biosynthesis; L-leucine from 3-methyl-2-oxobutanoate: step 1/4. Functionally, catalyzes the condensation of the acetyl group of acetyl-CoA with 3-methyl-2-oxobutanoate (2-ketoisovalerate) to form 3-carboxy-3-hydroxy-4-methylpentanoate (2-isopropylmalate). In Aeromonas hydrophila subsp. hydrophila (strain ATCC 7966 / DSM 30187 / BCRC 13018 / CCUG 14551 / JCM 1027 / KCTC 2358 / NCIMB 9240 / NCTC 8049), this protein is 2-isopropylmalate synthase.